The following is a 139-amino-acid chain: Holo-[acyl-carrier-protein] synthase (139 aa).

Mg(2+) contacts are provided by D8 and E61.

It belongs to the P-Pant transferase superfamily. AcpS family. It depends on Mg(2+) as a cofactor.

The protein localises to the cytoplasm. The catalysed reaction is apo-[ACP] + CoA = holo-[ACP] + adenosine 3',5'-bisphosphate + H(+). In terms of biological role, transfers the 4'-phosphopantetheine moiety from coenzyme A to a Ser of acyl-carrier-protein. In Bradyrhizobium sp. (strain BTAi1 / ATCC BAA-1182), this protein is Holo-[acyl-carrier-protein] synthase.